The primary structure comprises 248 residues: Large ribosomal subunit protein uL30A (248 aa).

The interval 1–44 is disordered; that stretch reads MSQKKQKIQVEQKVPENVAKKTQRDSKLRDAVAKRRTERLAANK. Basic and acidic residues predominate over residues 8-41; sequence IQVEQKVPENVAKKTQRDSKLRDAVAKRRTERLA.

The protein belongs to the universal ribosomal protein uL30 family.

Functionally, binds to G-rich structures in 28S rRNA and in mRNAs. Plays a regulatory role in the translation apparatus; inhibits cell-free translation of mRNAs. The chain is Large ribosomal subunit protein uL30A (Rpl7-1) from Paramecium tetraurelia.